The chain runs to 263 residues: Thiamine thiazole synthase (263 aa).

NAD(+)-binding positions include Ser36, 55 to 56 (ER), Gly63, Val127, and 157 to 159 (HVD). Positions 159 and 174 each coordinate Fe cation. Met228 serves as a coordination point for NAD(+). Arg238 is a glycine binding site.

This sequence belongs to the THI4 family. In terms of assembly, homooctamer; tetramer of dimers. Fe(2+) is required as a cofactor.

The enzyme catalyses hydrogen sulfide + glycine + NAD(+) = ADP-5-ethyl-4-methylthiazole-2-carboxylate + nicotinamide + 3 H2O + H(+). It participates in cofactor biosynthesis; thiamine diphosphate biosynthesis. In terms of biological role, involved in the biosynthesis of the thiazole moiety of thiamine. Catalyzes the conversion of NAD and glycine to adenosine diphosphate 5-(2-hydroxyethyl)-4-methylthiazole-2-carboxylate (ADT), an adenylated thiazole intermediate, using free sulfide as a source of sulfur. The polypeptide is Thiamine thiazole synthase (Solidesulfovibrio magneticus (strain ATCC 700980 / DSM 13731 / RS-1) (Desulfovibrio magneticus)).